The primary structure comprises 338 residues: Ketol-acid reductoisomerase (NADP(+)) (338 aa).

Residues 1–181 (MQVYYDKDCD…GGGRTGIIET (181 aa)) enclose the KARI N-terminal Rossmann domain. NADP(+) is bound by residues 24-27 (YGSQ), arginine 47, serine 50, serine 52, and 82-85 (DEFQ). Residue histidine 107 is part of the active site. Glycine 133 provides a ligand contact to NADP(+). Residues 182 to 327 (TFKDETETDL…EKLRAMMPWI (146 aa)) enclose the KARI C-terminal knotted domain. 4 residues coordinate Mg(2+): aspartate 190, glutamate 194, glutamate 226, and glutamate 230. Serine 251 serves as a coordination point for substrate.

It belongs to the ketol-acid reductoisomerase family. Mg(2+) serves as cofactor.

It carries out the reaction (2R)-2,3-dihydroxy-3-methylbutanoate + NADP(+) = (2S)-2-acetolactate + NADPH + H(+). The catalysed reaction is (2R,3R)-2,3-dihydroxy-3-methylpentanoate + NADP(+) = (S)-2-ethyl-2-hydroxy-3-oxobutanoate + NADPH + H(+). It participates in amino-acid biosynthesis; L-isoleucine biosynthesis; L-isoleucine from 2-oxobutanoate: step 2/4. It functions in the pathway amino-acid biosynthesis; L-valine biosynthesis; L-valine from pyruvate: step 2/4. In terms of biological role, involved in the biosynthesis of branched-chain amino acids (BCAA). Catalyzes an alkyl-migration followed by a ketol-acid reduction of (S)-2-acetolactate (S2AL) to yield (R)-2,3-dihydroxy-isovalerate. In the isomerase reaction, S2AL is rearranged via a Mg-dependent methyl migration to produce 3-hydroxy-3-methyl-2-ketobutyrate (HMKB). In the reductase reaction, this 2-ketoacid undergoes a metal-dependent reduction by NADPH to yield (R)-2,3-dihydroxy-isovalerate. The protein is Ketol-acid reductoisomerase (NADP(+)) of Teredinibacter turnerae (strain ATCC 39867 / T7901).